Reading from the N-terminus, the 124-residue chain is Cytochrome b5-like protein (124 aa).

Residues 5 to 22 (YLLILIIIYVIKIICRYF) form a helical membrane-spanning segment. The 76-residue stretch at 49–124 (NQINQVNQVN…ILSKYKITEK (76 aa)) folds into the Cytochrome b5 heme-binding domain. H84 and H108 together coordinate heme.

This sequence belongs to the cytochrome b5 family.

It localises to the membrane. Its function is as follows. Membrane bound hemoprotein which function as an electron carrier for several membrane bound oxygenases. This chain is Cytochrome b5-like protein, found in Acanthamoeba polyphaga (Amoeba).